Consider the following 375-residue polypeptide: Eukaryotic translation initiation factor 3 subunit F (375 aa).

In terms of domain architecture, MPN spans Val30 to Gly166. Residues Leu307 to Lys375 are disordered. The span at Gln323–Gly332 shows a compositional bias: gly residues. Composition is skewed to basic and acidic residues over residues Thr336–Arg345 and Arg358–Lys375.

It belongs to the eIF-3 subunit F family. In terms of assembly, component of the eukaryotic translation initiation factor 3 (eIF-3) complex.

It is found in the cytoplasm. In terms of biological role, component of the eukaryotic translation initiation factor 3 (eIF-3) complex, which is involved in protein synthesis of a specialized repertoire of mRNAs and, together with other initiation factors, stimulates binding of mRNA and methionyl-tRNAi to the 40S ribosome. The eIF-3 complex specifically targets and initiates translation of a subset of mRNAs involved in cell proliferation. In Aspergillus niger (strain ATCC MYA-4892 / CBS 513.88 / FGSC A1513), this protein is Eukaryotic translation initiation factor 3 subunit F.